The chain runs to 311 residues: Olfactory receptor 8B8 (311 aa).

Over 1-25 (MAAENSSFVTQFILAGLTDQPGVQI) the chain is Extracellular. Asn5 is a glycosylation site (N-linked (GlcNAc...) asparagine). Residues 26 to 46 (PLFFLFLGFYVVTVVGNLGLI) traverse the membrane as a helical segment. Residues 47–54 (TLIRLNSH) are Cytoplasmic-facing. The chain crosses the membrane as a helical span at residues 55-75 (LHTPMYFFLYNLSFIDFCYSS). At 76 to 99 (VITPKMLMSFVLKKNSISYAGCMT) the chain is on the extracellular side. Cys97 and Cys189 are joined by a disulfide. Residues 100 to 120 (QLFFFLFFVVSESFILSAMAY) traverse the membrane as a helical segment. At 121–139 (DRYVAICNPLLYMVTMSPQ) the chain is on the cytoplasmic side. A helical transmembrane segment spans residues 140-160 (VCFLLLLGVYGMGFAGAMAHT). Over 161–197 (ACMMGVTFCANNLVNHYMCDILPLLECACTSTYVNEL) the chain is Extracellular. A helical membrane pass occupies residues 198–217 (VVFVVVGIDIGVPTVTIFIS). The Cytoplasmic segment spans residues 218 to 237 (YALILSSIFHIDSTEGRSKA). Residues 238 to 258 (FSTCSSHIIAVSLFFGSGAFM) traverse the membrane as a helical segment. Over 259–271 (YLKPFSLLAMNQG) the chain is Extracellular. The helical transmembrane segment at 272 to 292 (KVSSLFYTTVVPMLNPLIYSL) threads the bilayer. Topologically, residues 293–311 (RNKDVKVALKKILNKNAFS) are cytoplasmic.

Belongs to the G-protein coupled receptor 1 family. Expressed in the tongue and testis.

The protein localises to the cell membrane. In terms of biological role, odorant receptor (Potential). May be involved in taste perception. This Homo sapiens (Human) protein is Olfactory receptor 8B8.